The following is a 21-amino-acid chain: Large ribosomal subunit protein uL10 (21 aa).

The protein belongs to the universal ribosomal protein uL10 family. In terms of assembly, part of the ribosomal stalk of the 50S ribosomal subunit. The N-terminus interacts with L11 and the large rRNA to form the base of the stalk. The C-terminus forms an elongated spine to which L12 dimers bind in a sequential fashion forming a multimeric L10(L12)X complex.

Functionally, forms part of the ribosomal stalk, playing a central role in the interaction of the ribosome with GTP-bound translation factors. The sequence is that of Large ribosomal subunit protein uL10 (rplJ) from Proteus vulgaris.